The primary structure comprises 479 residues: Kynurenine 3-monooxygenase (479 aa).

FAD contacts are provided by residues Val-19, 37-40 (YEAR), and Ala-57. The L-kynurenine site is built by Arg-85 and Tyr-99. FAD contacts are provided by residues Arg-111, Leu-136, Thr-172, Asp-304, and 317-318 (MN). L-kynurenine contacts are provided by Asn-363 and Tyr-398. The next 2 helical transmembrane spans lie at 385–404 (FLHA…VAFT) and 425–445 (GLFV…VHHL).

The protein belongs to the aromatic-ring hydroxylase family. KMO subfamily. FAD serves as cofactor. In terms of tissue distribution, expressed by organs containing secondary lymphoid tissue, such as the lung, spleen, mesenteric lymph node, thymus and peripheral lymph nodes.

Its subcellular location is the mitochondrion outer membrane. It catalyses the reaction L-kynurenine + NADPH + O2 + H(+) = 3-hydroxy-L-kynurenine + NADP(+) + H2O. The protein operates within cofactor biosynthesis; NAD(+) biosynthesis; quinolinate from L-kynurenine: step 1/3. Catalyzes the hydroxylation of L-kynurenine (L-Kyn) to form 3-hydroxy-L-kynurenine (L-3OHKyn). Required for synthesis of quinolinic acid, a neurotoxic NMDA receptor antagonist and potential endogenous inhibitor of NMDA receptor signaling in axonal targeting, synaptogenesis and apoptosis during brain development. Quinolinic acid may also affect NMDA receptor signaling in pancreatic beta cells, osteoblasts, myocardial cells, and the gastrointestinal tract. The polypeptide is Kynurenine 3-monooxygenase (Mus musculus (Mouse)).